The sequence spans 403 residues: Fasciclin-like arabinogalactan protein 2 (403 aa).

Positions 1–26 (MAYLRRAATALVLIFQLHLFLSLSNA) are cleaved as a signal peptide. FAS1 domains lie at 27–174 (HNIT…SQVL) and 187–326 (SDLI…DKVL). Residues Asn-28, Asn-130, Asn-164, and Asn-248 are each glycosylated (N-linked (GlcNAc...) asparagine). Positions 338–371 (SAPAPKSSKKKPKNAEADADGPSADAPSDDDVEV) are disordered. Ala-378 is lipidated: GPI-anchor amidated alanine. Residues 379–403 (VSAMITRTSNVVTAIVGLCFGVWLM) constitute a propeptide, removed in mature form.

The protein belongs to the fasciclin-like AGP family. Expressed mainly in flowers and to a lesser extent in leaves and roots.

It localises to the cell membrane. In terms of biological role, may be a cell surface adhesion protein. In Arabidopsis thaliana (Mouse-ear cress), this protein is Fasciclin-like arabinogalactan protein 2 (FLA2).